Reading from the N-terminus, the 723-residue chain is Threonine--tRNA ligase, mitochondrial (723 aa).

Position 57 is a phosphoserine (S57). The region spanning R64–T126 is the TGS domain.

The protein belongs to the class-II aminoacyl-tRNA synthetase family. Homodimer.

Its subcellular location is the mitochondrion matrix. The enzyme catalyses tRNA(Thr) + L-threonine + ATP = L-threonyl-tRNA(Thr) + AMP + diphosphate + H(+). In terms of biological role, catalyzes the attachment of threonine to tRNA(Thr) in a two-step reaction: threonine is first activated by ATP to form Thr-AMP and then transferred to the acceptor end of tRNA(Thr). Also edits incorrectly charged tRNA(Thr) via its editing domain. This Mus musculus (Mouse) protein is Threonine--tRNA ligase, mitochondrial (Tars2).